Here is a 144-residue protein sequence, read N- to C-terminus: Peptide methionine sulfoxide reductase MsrB (144 aa).

The 124-residue stretch at 5-128 folds into the MsrB domain; the sequence is QEELRQRIGH…NSAALDFIPY (124 aa). Cysteine 117 functions as the Nucleophile in the catalytic mechanism.

Belongs to the MsrB Met sulfoxide reductase family.

The catalysed reaction is L-methionyl-[protein] + [thioredoxin]-disulfide + H2O = L-methionyl-(R)-S-oxide-[protein] + [thioredoxin]-dithiol. The protein is Peptide methionine sulfoxide reductase MsrB of Streptococcus agalactiae serotype Ia (strain ATCC 27591 / A909 / CDC SS700).